The sequence spans 601 residues: Polypeptide N-acetylgalactosaminyltransferase 11 (601 aa).

The Cytoplasmic segment spans residues 1 to 7; that stretch reads MGSAALR. The chain crosses the membrane as a helical; Signal-anchor for type II membrane protein span at residues 8–28; that stretch reads CFCYGCLFTSVTWTLLLFIYF. N-linked (GlcNAc...) asparagine glycosylation is found at Asn29 and Asn202. The Lumenal segment spans residues 29–601; that stretch reads NFSEESQGFR…SPSQQWHLEN (573 aa). The tract at residues 143-254 is catalytic subdomain A; the sequence is LPMASIVICF…EMWLQPLLAP (112 aa). The catalytic subdomain B stretch occupies residues 312-374; it reads PFRSPTMAGG…PCSRVGHIFR (63 aa). Residues 469–600 enclose the Ricin B-type lectin domain; sequence RPKILQRGRL…GSPSQQWHLE (132 aa). A disulfide bridge links Cys486 with Cys505. Residue Asn508 is glycosylated (N-linked (GlcNAc...) asparagine). Disulfide bonds link Cys529–Cys546 and Cys571–Cys589.

Belongs to the glycosyltransferase 2 family. GalNAc-T subfamily. In terms of assembly, interacts with notch1. It depends on Mn(2+) as a cofactor. Ca(2+) is required as a cofactor.

Its subcellular location is the golgi apparatus membrane. It carries out the reaction L-seryl-[protein] + UDP-N-acetyl-alpha-D-galactosamine = a 3-O-[N-acetyl-alpha-D-galactosaminyl]-L-seryl-[protein] + UDP + H(+). The enzyme catalyses L-threonyl-[protein] + UDP-N-acetyl-alpha-D-galactosamine = a 3-O-[N-acetyl-alpha-D-galactosaminyl]-L-threonyl-[protein] + UDP + H(+). Its pathway is protein modification; protein glycosylation. In terms of biological role, polypeptide N-acetylgalactosaminyltransferase that catalyzes the initiation of protein O-linked glycosylation and is involved in left/right asymmetry by mediating O-glycosylation of NOTCH1. O-glycosylation of NOTCH1 promotes activation of NOTCH1, modulating the balance between motile and immotile (sensory) cilia at the left-right organiser (LRO). Polypeptide N-acetylgalactosaminyltransferases catalyze the transfer of an N-acetyl-D-galactosamine residue to a serine or threonine residue on the protein receptor. This chain is Polypeptide N-acetylgalactosaminyltransferase 11 (galnt11), found in Xenopus tropicalis (Western clawed frog).